Here is a 208-residue protein sequence, read N- to C-terminus: Uracil phosphoribosyltransferase (208 aa).

5-phospho-alpha-D-ribose 1-diphosphate-binding positions include Arg78, Arg103, and 130–138; that span reads DPMLATGGS. Residues Ile193 and 198–200 contribute to the uracil site; that span reads GDA. Residue Asp199 coordinates 5-phospho-alpha-D-ribose 1-diphosphate.

This sequence belongs to the UPRTase family. Mg(2+) is required as a cofactor.

It catalyses the reaction UMP + diphosphate = 5-phospho-alpha-D-ribose 1-diphosphate + uracil. It functions in the pathway pyrimidine metabolism; UMP biosynthesis via salvage pathway; UMP from uracil: step 1/1. With respect to regulation, allosterically activated by GTP. Its function is as follows. Catalyzes the conversion of uracil and 5-phospho-alpha-D-ribose 1-diphosphate (PRPP) to UMP and diphosphate. The polypeptide is Uracil phosphoribosyltransferase (Histophilus somni (strain 129Pt) (Haemophilus somnus)).